Reading from the N-terminus, the 325-residue chain is HTH-type transcriptional regulator BbuR (325 aa).

The 58-residue stretch at 15 to 72 (LDTDLLNVFCWVAKTQSFSRAAAELGTSQPVITRKIGRLEECLGVALFVRSNRGCVLT) folds into the HTH lysR-type domain. The segment at residues 32 to 51 (FSRAAAELGTSQPVITRKIG) is a DNA-binding region (H-T-H motif).

Belongs to the LysR transcriptional regulatory family.

The polypeptide is HTH-type transcriptional regulator BbuR (bbuR) (Bordetella bronchiseptica (strain ATCC BAA-588 / NCTC 13252 / RB50) (Alcaligenes bronchisepticus)).